Reading from the N-terminus, the 187-residue chain is MTTTENAQPRLKTRYREEIKTALNDEFKYANVMQIPGVVKVVVNMGVGDAARDAKLINGAVTDLALITGQKPEIRKARKSIAQFKLREGMPIGARVTLRGDRMWEFLDRLVSIALPRIRDFRGLSPKQFDGKGNYTFGLTEQSMFHEIDVDSIDRPRGMDITVVTSATTDDEGRALLRQLGFPFKEN.

This sequence belongs to the universal ribosomal protein uL5 family. As to quaternary structure, part of the 50S ribosomal subunit; part of the 5S rRNA/L5/L18/L25 subcomplex. Contacts the 5S rRNA and the P site tRNA. Forms a bridge to the 30S subunit in the 70S ribosome.

This is one of the proteins that bind and probably mediate the attachment of the 5S RNA into the large ribosomal subunit, where it forms part of the central protuberance. In the 70S ribosome it contacts protein S13 of the 30S subunit (bridge B1b), connecting the 2 subunits; this bridge is implicated in subunit movement. Contacts the P site tRNA; the 5S rRNA and some of its associated proteins might help stabilize positioning of ribosome-bound tRNAs. This chain is Large ribosomal subunit protein uL5, found in Mycobacteroides abscessus (strain ATCC 19977 / DSM 44196 / CCUG 20993 / CIP 104536 / JCM 13569 / NCTC 13031 / TMC 1543 / L948) (Mycobacterium abscessus).